The following is an 840-amino-acid chain: MLTDILKKIFGSQNERILKRIAPLVDEINSYEPVMRKLSDAALKAKTPEFKQRIANGEPLDDLLPEAFAVAREGAVRTLGMRPFDVQMIGGIVLHEGMIAEMKTGEGKTLVAVMPIYLNALTGRGVHLVTVNDYLARRDSEWMGQVYKFLGLSVGCIVHGLDDPERKEAYGADVTYGTNNEYGFDYLRDNMKFRIEDMVQRELNYAIVDEVDSILIDEARTPLIISGPAEKSTALYYNINRIIPQLKPETHYTKEEKSRTVALTEDGVTRTEKLLGVDNLYDPRQIDILHHVQQALRAHVLFKRDVDYIVKDGKVIIVDEFTGRLMPGRRYSEGLHQALEAKENVHIENENQTLASITFQNYFRMFDKLAGMTGTAETEAAEFAKIYKLEVVVIPTHRKMIREDYADCIYRTEAEKFRAVAEEIKEAYAVKRPVLVGTVNIAKSEKLSGILKRQGVPHQVLNAKHHEKEAEIVALAGQPGAVTISTNMAGRGTDIVLGPGVVDVGGLHIIGTERHEARRIDNQLRGRSGRQGDPGSSRFYLSLEDDLMRIFAADRLSGLMQRIGMKEDEPIEHRLITKAIENAQSKVEAQNFSIRKQLLEYDDVMNQQREVIYRQRREALQGENLKPVVLDMIEDLLEGILAETADEKHYAEDWDLEKINSEVLRLFGLQMNLTVESLGDIEYEEFRDSLLERLTKRYEAREQEFGESMMRELESYLLLQTVDTYWKDHLLNMDHLKEGIGLRGYGQQDPLIAYKREGHALFDEMIERIKEETIRLLFHIQIQREEQLDELRKEQEDQPMFFGPAEGAGQKPQTRKDRKVGRNDPCPCGSGKKYKKCCGK.

Residues Gln-87, 105-109 (GEGKT), and Asp-494 contribute to the ATP site. Positions 791–840 (LRKEQEDQPMFFGPAEGAGQKPQTRKDRKVGRNDPCPCGSGKKYKKCCGK) are disordered. Zn(2+)-binding residues include Cys-826, Cys-828, Cys-837, and Cys-838.

Belongs to the SecA family. Monomer and homodimer. Part of the essential Sec protein translocation apparatus which comprises SecA, SecYEG and auxiliary proteins SecDF-YajC and YidC. Zn(2+) serves as cofactor.

The protein localises to the cell inner membrane. Its subcellular location is the cytoplasm. It catalyses the reaction ATP + H2O + cellular proteinSide 1 = ADP + phosphate + cellular proteinSide 2.. Part of the Sec protein translocase complex. Interacts with the SecYEG preprotein conducting channel. Has a central role in coupling the hydrolysis of ATP to the transfer of proteins into and across the cell membrane, serving as an ATP-driven molecular motor driving the stepwise translocation of polypeptide chains across the membrane. The chain is Protein translocase subunit SecA from Syntrophobacter fumaroxidans (strain DSM 10017 / MPOB).